The following is a 331-amino-acid chain: 5-dehydro-2-deoxygluconokinase (331 aa).

This sequence belongs to the carbohydrate kinase PfkB family.

It catalyses the reaction 5-dehydro-2-deoxy-D-gluconate + ATP = 6-phospho-5-dehydro-2-deoxy-D-gluconate + ADP + H(+). The protein operates within polyol metabolism; myo-inositol degradation into acetyl-CoA; acetyl-CoA from myo-inositol: step 5/7. In terms of biological role, catalyzes the phosphorylation of 5-dehydro-2-deoxy-D-gluconate (2-deoxy-5-keto-D-gluconate or DKG) to 6-phospho-5-dehydro-2-deoxy-D-gluconate (DKGP). In Halalkalibacterium halodurans (strain ATCC BAA-125 / DSM 18197 / FERM 7344 / JCM 9153 / C-125) (Bacillus halodurans), this protein is 5-dehydro-2-deoxygluconokinase.